The primary structure comprises 744 residues: 5-methyltetrahydropteroyltriglutamate--homocysteine methyltransferase (744 aa).

Residues 17–20 (REVK) and K110 each bind 5-methyltetrahydropteroyltri-L-glutamate. L-homocysteine contacts are provided by residues 422-424 (IGS) and E475. Residues 422–424 (IGS) and E475 contribute to the L-methionine site. W552 serves as a coordination point for 5-methyltetrahydropteroyltri-L-glutamate. D590 serves as a coordination point for L-homocysteine. D590 contributes to the L-methionine binding site. Residue E596 participates in 5-methyltetrahydropteroyltri-L-glutamate binding. Zn(2+) is bound by residues H632, C634, and E656. H685 acts as the Proton donor in catalysis. Residue C717 coordinates Zn(2+).

The protein belongs to the vitamin-B12 independent methionine synthase family. Zn(2+) serves as cofactor.

The enzyme catalyses 5-methyltetrahydropteroyltri-L-glutamate + L-homocysteine = tetrahydropteroyltri-L-glutamate + L-methionine. The protein operates within amino-acid biosynthesis; L-methionine biosynthesis via de novo pathway; L-methionine from L-homocysteine (MetE route): step 1/1. Functionally, catalyzes the transfer of a methyl group from 5-methyltetrahydrofolate to homocysteine resulting in methionine formation. The protein is 5-methyltetrahydropteroyltriglutamate--homocysteine methyltransferase of Trichodesmium erythraeum (strain IMS101).